A 153-amino-acid polypeptide reads, in one-letter code: MTKIKADPDGPEAQAEACSGERTYQELLVNQNPIAQPLASRRLTRKLYKCIKKAVKQKQIRRGVKEVQKFVNKGEKGIMVLAGDTLPIEVYCHLPVMCEDRNLPYVYIPSKTDLGAAAGSKRPTCVIMVKPHEEYQEAYDECLEEVQSLPLPL.

Lys3 is covalently cross-linked (Glycyl lysine isopeptide (Lys-Gly) (interchain with G-Cter in SUMO2)). A Glycyl lysine isopeptide (Lys-Gly) (interchain with G-Cter in SUMO); alternate cross-link involves residue Lys5. Lys5 is covalently cross-linked (Glycyl lysine isopeptide (Lys-Gly) (interchain with G-Cter in SUMO1); alternate). A Glycyl lysine isopeptide (Lys-Gly) (interchain with G-Cter in SUMO2); alternate cross-link involves residue Lys5. Ser19 is modified (phosphoserine).

The protein belongs to the eukaryotic ribosomal protein eL8 family. As to quaternary structure, part of the H/ACA small nucleolar ribonucleoprotein (H/ACA snoRNP) complex, which contains NHP2/NOLA2, GAR1/NOLA1, NOP10/NOLA3, and DKC1/NOLA4, which is presumed to be the catalytic subunit. The complex contains a stable core formed by binding of one or two NOP10-DKC1 heterodimers to NHP2; GAR1 subsequently binds to this core via DKC1. The complex binds a box H/ACA small nucleolar RNA (snoRNA), which may target the specific site of modification within the RNA substrate. During assembly, the complex contains NAF1 instead of GAR1/NOLA1. The complex also interacts with TERC, which contains a 3'-terminal domain related to the box H/ACA snoRNAs. Specific interactions with snoRNAs or TERC are mediated by GAR1 and NHP2. Associates with NOLC1/NOPP140. H/ACA snoRNPs interact with the SMN complex, consisting of SMN1 or SMN2, GEMIN2/SIP1, DDX20/GEMIN3, and GEMIN4. This is mediated by interaction between GAR1 and SMN1 or SMN2. The SMN complex may be required for correct assembly of the H/ACA snoRNP complex. Component of the telomerase holoenzyme complex composed of one molecule of TERT, one molecule of WRAP53/TCAB1, two molecules of H/ACA ribonucleoprotein complex subunits DKC1, NOP10, NHP2 and GAR1, and a telomerase RNA template component (TERC). The telomerase holoenzyme complex is associated with TEP1, SMG6/EST1A and POT1. Expressed in brain, colon, heart, kidney, ovary, pancreas, placenta, prostate, skeletal muscle, small intestine, spleen, testis and thymus. Also expressed at lower levels in the liver.

The protein resides in the nucleus. Its subcellular location is the nucleolus. It is found in the cajal body. In terms of biological role, required for ribosome biogenesis and telomere maintenance. Part of the H/ACA small nucleolar ribonucleoprotein (H/ACA snoRNP) complex, which catalyzes pseudouridylation of rRNA. This involves the isomerization of uridine such that the ribose is subsequently attached to C5, instead of the normal N1. Each rRNA can contain up to 100 pseudouridine ('psi') residues, which may serve to stabilize the conformation of rRNAs. May also be required for correct processing or intranuclear trafficking of TERC, the RNA component of the telomerase reverse transcriptase (TERT) holoenzyme. This Homo sapiens (Human) protein is H/ACA ribonucleoprotein complex subunit 2 (NHP2).